Reading from the N-terminus, the 299-residue chain is Recombination-associated protein RdgC (299 aa).

The protein belongs to the RdgC family.

It is found in the cytoplasm. The protein localises to the nucleoid. May be involved in recombination. In Neisseria meningitidis serogroup C (strain 053442), this protein is Recombination-associated protein RdgC.